A 366-amino-acid chain; its full sequence is D-alanine--D-alanine ligase (366 aa).

The ATP-grasp domain maps to 148–357 (KMTFEQAGLA…FPELVDRLIQ (210 aa)). ATP is bound at residue 184-239 (EAALGYPAFVKPANLGSSVGIAKVRSRQELEAALDNAASYDRRLVVEAGVVAREVE). Mg(2+) contacts are provided by Asp-310, Glu-324, and Asn-326.

This sequence belongs to the D-alanine--D-alanine ligase family. Requires Mg(2+) as cofactor. Mn(2+) is required as a cofactor.

It is found in the cytoplasm. The enzyme catalyses 2 D-alanine + ATP = D-alanyl-D-alanine + ADP + phosphate + H(+). It participates in cell wall biogenesis; peptidoglycan biosynthesis. Functionally, cell wall formation. This is D-alanine--D-alanine ligase from Nostoc punctiforme (strain ATCC 29133 / PCC 73102).